The primary structure comprises 753 residues: MSESSSDSDSSCGWTVINHEGSDIEIVNSATASDNCGLTLECSLVEQEELPVLYVGHGGEESSANNTSSVGETMLSSMRETKSAAEVEEAPSPEDNVYFGTTSDDSDIVTLEPPKLEEMGNQEVTIQEAPSSDDLNMGSSSSSQYAFCQPEPVFSSQPSDEESSSDDTSHEPSPAPRRRRNRKKTVSISESEEPPLAEPEDEPSKEPSKRHFSRGLNKCVILALVIAVSMGFGHFYGTIQIQKQLVRKTHEDELDGVKGYLSQRKQEQESFLDFKSLKENLERCWTVTESEKITFETQKKNLAAENQYLRISLEKEEQALSSLQEELRQLREQIRLLEDKGTSTQLVRENQVLKQYLEVEKQKTDSFLREREMLLEEARMLKRDLEREQLTAMALRAELEQFIPGQAQSRAESPSVQTEEKEVGLLQQRLAELEQKLIFEQQRSDLWERLYVEAKDQHGKQETDGRKRGSRGSHRAKSKSKETFLGTVKETFDAMKNSTKEFVRHHKEKIKQAKEAVKENLKKFSDSVKSTFRHFKDTTKNIFDEKGSKRFRAPKEAATEKTRTAYSYSSYSQQEAPNQNQNCRRPSAQRDGGREKPSHSEEIRKNANSYTYKAKSDCRGTHSTRRVCSGMFECAGQEAISPVNKASPVRMNDFKQLIHWYLLNELETFHHWKELDQFISPFFPNGVFRHDQQLFADFVDDVKGYLKSIKEYRVEDGNLEKLDGCIYRHFGHVFALPFGPRSVYIKPCYYNSF.

The Cytoplasmic segment spans residues 1 to 218; the sequence is MSESSSDSDS…KRHFSRGLNK (218 aa). The interaction with MCF2L and SRC stretch occupies residues 1 to 307; sequence MSESSSDSDS…QKKNLAAENQ (307 aa). A disordered region spans residues 57–211; that stretch reads HGGEESSANN…EPSKEPSKRH (155 aa). 2 stretches are compositionally biased toward polar residues: residues 62–78 and 122–138; these read SSAN…LSSM and QEVT…LNMG. The span at 176 to 185 shows a compositional bias: basic residues; that stretch reads PRRRRNRKKT. Serine 187 is modified (phosphoserine). Positions 190 to 201 are enriched in acidic residues; it reads ESEEPPLAEPED. A helical; Signal-anchor for type II membrane protein membrane pass occupies residues 219-239; sequence CVILALVIAVSMGFGHFYGTI. Residues 240–753 are Lumenal-facing; the sequence is QIQKQLVRKT…YIKPCYYNSF (514 aa). The stretch at 298 to 449 forms a coiled coil; that stretch reads QKKNLAAENQ…EQQRSDLWER (152 aa). Residues 457-467 show a composition bias toward basic and acidic residues; sequence QHGKQETDGRK. The tract at residues 457–484 is disordered; the sequence is QHGKQETDGRKRGSRGSHRAKSKSKETF. Basic residues predominate over residues 468–478; sequence RGSRGSHRAKS. A coiled-coil region spans residues 503–529; that stretch reads VRHHKEKIKQAKEAVKENLKKFSDSVK. The span at 553–563 shows a compositional bias: basic and acidic residues; sequence APKEAATEKTR. Residues 553–606 form a disordered region; that stretch reads APKEAATEKTRTAYSYSSYSQQEAPNQNQNCRRPSAQRDGGREKPSHSEEIRKN. Positions 573–584 are enriched in polar residues; it reads QQEAPNQNQNCR. A compositionally biased stretch (basic and acidic residues) spans 591-605; it reads DGGREKPSHSEEIRK.

The protein belongs to the CCPG1 family. In terms of assembly, interacts with MCF2L. May interact with MCF2, ARHGEF1, BCR, VAV1 and FGD1, but not with TIAM1. Interacts with GTP-bound CDC42 and SRC.

The protein resides in the cytoplasmic granule membrane. Functionally, acts as an assembly platform for Rho protein signaling complexes. Limits guanine nucleotide exchange activity of MCF2L toward RHOA, which results in an inhibition of both its transcriptional activation ability and its transforming activity. Does not inhibit activity of MCF2L toward CDC42, or activity of MCF2 toward either RHOA or CDC42. May be involved in cell cycle regulation. The polypeptide is Cell cycle progression protein 1 (Ccpg1) (Mus musculus (Mouse)).